Reading from the N-terminus, the 195-residue chain is IMP cyclohydrolase (195 aa).

It belongs to the archaeal IMP cyclohydrolase family.

It catalyses the reaction IMP + H2O = 5-formamido-1-(5-phospho-D-ribosyl)imidazole-4-carboxamide. Its pathway is purine metabolism; IMP biosynthesis via de novo pathway; IMP from 5-formamido-1-(5-phospho-D-ribosyl)imidazole-4-carboxamide: step 1/1. Functionally, catalyzes the cyclization of 5-formylamidoimidazole-4-carboxamide ribonucleotide to IMP. This is IMP cyclohydrolase from Haloquadratum walsbyi (strain DSM 16790 / HBSQ001).